Consider the following 630-residue polypeptide: Phosphomethylpyrimidine synthase (630 aa).

Disordered stretches follow at residues 1 to 22 (MADIDSRLDTTQATPIGVTTGP) and 97 to 120 (AQREVRPEDNGQLGPDRSGGVPAF). Residues asparagine 224, methionine 253, tyrosine 282, histidine 318, 338 to 340 (SRG), 379 to 382 (DGLR), and glutamate 418 each bind substrate. Histidine 422 is a Zn(2+) binding site. Tyrosine 445 provides a ligand contact to substrate. Residue histidine 486 coordinates Zn(2+). [4Fe-4S] cluster-binding residues include cysteine 566, cysteine 569, and cysteine 574.

The protein belongs to the ThiC family. As to quaternary structure, homodimer. Requires [4Fe-4S] cluster as cofactor.

It carries out the reaction 5-amino-1-(5-phospho-beta-D-ribosyl)imidazole + S-adenosyl-L-methionine = 4-amino-2-methyl-5-(phosphooxymethyl)pyrimidine + CO + 5'-deoxyadenosine + formate + L-methionine + 3 H(+). Its pathway is cofactor biosynthesis; thiamine diphosphate biosynthesis. Catalyzes the synthesis of the hydroxymethylpyrimidine phosphate (HMP-P) moiety of thiamine from aminoimidazole ribotide (AIR) in a radical S-adenosyl-L-methionine (SAM)-dependent reaction. The polypeptide is Phosphomethylpyrimidine synthase (Sphingopyxis alaskensis (strain DSM 13593 / LMG 18877 / RB2256) (Sphingomonas alaskensis)).